Reading from the N-terminus, the 154-residue chain is Lymphocyte antigen 6K (154 aa).

Residues 1-20 (MAFLVALLVVLGLQLVQSNA) form the signal peptide. The UPAR/Ly6 domain maps to 21–117 (LTCHVCEAQN…NGEGPPTDQL (97 aa)). Glycine 123 is lipidated: GPI-anchor amidated glycine. Residues 124 to 154 (KASGRRHRYIELLLTGFMVLTANGLSALCLL) constitute a propeptide, removed in mature form.

Interacts with ADAM3 and TEX101. Strongly expressed in testes and weakly expressed in the epididymis, ovary, and uterus. Expressed in testicular germ cells (TGCs). Expressed in the testicular seminiferous tubules, in spermatocytes, spermatids, and testicular spermatozoa.

It is found in the secreted. The protein resides in the cytoplasm. The protein localises to the cell membrane. Its subcellular location is the cytoplasmic vesicle. It localises to the secretory vesicle. It is found in the acrosome. The protein resides in the membrane raft. Its function is as follows. Required for sperm migration into the oviduct and male fertility by controlling binding of sperm to zona pellucida. May play a role in cell growth. The sequence is that of Lymphocyte antigen 6K from Mus musculus (Mouse).